The primary structure comprises 426 residues: MTQMTDAKSGITTEEMKFVAKEEGMDVETLKNLIAKGYVVIPKNVNRNTKPVGIGDNLRTKVNVNLGTSPDFIDIACELKKVEISNKYGADAIMDLSTGGNLPEIRKEIIKNTNLPIGTVPIYEVGADAKAKYGRVIDMDEDLIFNVIERQAKEGVDFMTLHCGITKQTVSVLNNDPRKMGVVSRGGAFLTAYIMYHDKENPLYKEFDYLLELLKEHDVTLSLGDGMRPGCLQDNTDRAQIQELITLGELVDKCREKGVQVMVEGPGHVPYNNIEANMKIQKTVCKNAPFYVLGPIVTDLAPGYDHITAAIGGTLAAVSGANFLCYVTPAEHVRLMKEDDVKEGLIASKIAAQAADVAKGHELAWKLEKKMADARMKHDWKKQFEIALDSDKPRKMREEIPSKDEKACSVCGDYCALLMVEELGKR.

Residues Asn-65, Met-94, Tyr-123, His-162, 184–186 (SRG), 225–228 (DGMR), and Glu-264 contribute to the substrate site. His-268 provides a ligand contact to Zn(2+). Tyr-291 serves as a coordination point for substrate. His-332 contributes to the Zn(2+) binding site. 3 residues coordinate [4Fe-4S] cluster: Cys-408, Cys-411, and Cys-415.

Belongs to the ThiC family. Requires [4Fe-4S] cluster as cofactor.

The catalysed reaction is 5-amino-1-(5-phospho-beta-D-ribosyl)imidazole + S-adenosyl-L-methionine = 4-amino-2-methyl-5-(phosphooxymethyl)pyrimidine + CO + 5'-deoxyadenosine + formate + L-methionine + 3 H(+). It participates in cofactor biosynthesis; thiamine diphosphate biosynthesis. Its function is as follows. Catalyzes the synthesis of the hydroxymethylpyrimidine phosphate (HMP-P) moiety of thiamine from aminoimidazole ribotide (AIR) in a radical S-adenosyl-L-methionine (SAM)-dependent reaction. This Methanococcus maripaludis (strain C6 / ATCC BAA-1332) protein is Phosphomethylpyrimidine synthase.